Reading from the N-terminus, the 113-residue chain is Large ribosomal subunit protein bL19 (113 aa).

It belongs to the bacterial ribosomal protein bL19 family.

In terms of biological role, this protein is located at the 30S-50S ribosomal subunit interface and may play a role in the structure and function of the aminoacyl-tRNA binding site. The chain is Large ribosomal subunit protein bL19 from Corynebacterium urealyticum (strain ATCC 43042 / DSM 7109).